The chain runs to 798 residues: Heterogeneous nuclear ribonucleoprotein U (798 aa).

An N-acetylserine modification is found at serine 2. Position 4 is a phosphoserine (serine 4). Positions 8 to 42 (VKKLKVSELKEELKKRRLSDKGLKADLMDRLQAAL) constitute an SAP domain. 2 positions are modified to N6-acetyllysine: lysine 17 and lysine 21. The tract at residues 41–229 (ALDNEAGGRP…VKRPREDHGR (189 aa)) is disordered. Position 58 is a phosphoserine (serine 58). Low complexity-rich tracts occupy residues 71–80 (AGLEQEAAAG) and 103–113 (ENGAAGAADAG). 2 stretches are compositionally biased toward acidic residues: residues 114–128 (AMEE…ENGD) and 134–147 (EGED…EGAG). Residues 153–169 (GEQQSQPPAAAQQASQQ) show a composition bias toward low complexity. The residue at position 179 (lysine 179) is an N6-acetyllysine. Serine 180 is subject to ADP-ribosylserine. Over residues 192–203 (APPGARQGQQQA) the composition is skewed to low complexity. Over residues 207–229 (GKTEQKAGDKKRGVKRPREDHGR) the composition is skewed to basic and acidic residues. At arginine 229 the chain carries Citrulline. Lysine 239 is subject to N6-acetyllysine; alternate. Residue lysine 239 forms a Glycyl lysine isopeptide (Lys-Gly) (interchain with G-Cter in SUMO1); alternate linkage. A Glycyl lysine isopeptide (Lys-Gly) (interchain with G-Cter in SUMO2); alternate cross-link involves residue lysine 239. Tyrosine 240 carries the post-translational modification Phosphotyrosine. Residues serine 241 and serine 245 each carry the phosphoserine modification. The B30.2/SPRY domain maps to 242-438 (RAKSPQPPVE…VEFNFGQKEK (197 aa)). Residue threonine 260 is modified to Phosphothreonine. The residue at position 326 (lysine 326) is an N6-acetyllysine. Positions 462–646 (PKGPEEKKDC…QKLLEQYKEE (185 aa)) are ATPase domain. A Glycyl lysine isopeptide (Lys-Gly) (interchain with G-Cter in SUMO2) cross-link involves residue lysine 469. Residue 478–485 (GLPGAGKT) coordinates ATP. Lysine 490 and lysine 498 each carry N6-acetyllysine; alternate. Residues lysine 490 and lysine 498 each participate in a glycyl lysine isopeptide (Lys-Gly) (interchain with G-Cter in SUMO2); alternate cross-link. Threonine 506 is subject to Phosphothreonine. Residue lysine 510 forms a Glycyl lysine isopeptide (Lys-Gly) (interchain with G-Cter in SUMO2) linkage. Position 525 is an N6-acetyllysine (lysine 525). Lysine 539 carries the post-translational modification N6-acetyllysine; alternate. A Glycyl lysine isopeptide (Lys-Gly) (interchain with G-Cter in SUMO2); alternate cross-link involves residue lysine 539. Residue lysine 548 forms a Glycyl lysine isopeptide (Lys-Gly) (interchain with G-Cter in SUMO2) linkage. Threonine 556 bears the Phosphothreonine mark. Residues lysine 583 and lysine 600 each participate in a glycyl lysine isopeptide (Lys-Gly) (interchain with G-Cter in SUMO2) cross-link. The actin-binding stretch occupies residues 585–600 (EDYKQRTQKKAEVEGK). N6-acetyllysine; alternate is present on lysine 609. Residue lysine 609 forms a Glycyl lysine isopeptide (Lys-Gly) (interchain with G-Cter in SUMO2); alternate linkage. The stretch at 624–651 (DEITYVELQKEEAQKLLEQYKEESKKAL) forms a coiled coil. Glycyl lysine isopeptide (Lys-Gly) (interchain with G-Cter in SUMO2) cross-links involve residues lysine 638 and lysine 644. Positions 645–657 (EESKKALPPEKKQ) are enriched in basic and acidic residues. The interval 645–727 (EESKKALPPE…GSGGIGYPYP (83 aa)) is disordered. At arginine 676 the chain carries Omega-N-methylarginine. Gly residues predominate over residues 684 to 702 (GGFNMRGGNFRGGAPGNRG). The tract at residues 688–713 (MRGGNFRGGAPGNRGGYNRRGNMPQR) is RNA-binding RGG-box. 3 positions are modified to asymmetric dimethylarginine: arginine 689, arginine 694, and arginine 701. Residues arginine 707 and arginine 713 each carry the asymmetric dimethylarginine; alternate modification. 2 positions are modified to omega-N-methylarginine; alternate: arginine 707 and arginine 713. Gly residues predominate over residues 713 to 723 (RGGGGGSGGIG). Residues arginine 728 and arginine 735 each carry the asymmetric dimethylarginine modification. Positions 743 to 772 (NYNRGGMPNRGNYNQNFRGRGNNRGYKNQS) are disordered. Lysine 787 carries the N6-acetyllysine; alternate modification. Lysine 787 participates in a covalent cross-link: Glycyl lysine isopeptide (Lys-Gly) (interchain with G-Cter in SUMO2); alternate.

Oligomer (via ATPase domain and RNA-binding RGG-box region); oligomerization occurs upon ATP-binding in a chromatin-associated RNAs (caRNAs)- and transcription-dependent manner and is required for chromatin decompaction. ATP hydrolysis is required to cycle from an oligomeric to monomeric state to compact chromatin. Component of the coding region determinant (CRD)-mediated complex, composed of DHX9, HNRNPU, IGF2BP1, SYNCRIP and YBX1. Identified in the spliceosome C complex. Identified in a IGF2BP1-dependent mRNP granule complex containing untranslated mRNAs. Associates with heterogeneous nuclear ribonucleoprotein (hnRNP) particles. Associates (via middle region) with the C-terminal domain (CTD) RNA polymerase II (Pol II) holoenzyme; this association occurs in a RNA-independent manner. Associates (via middle region) with the core-TFIIH basal transcription factor complex; this association inhibits the CTD phosphorylation of RNA polymerase II holoenzyme by down-regulating TFIIH kinase activity. Associates with the telomerase holoenzyme complex. Associates with spindle microtubules (MTs) in a TPX2-dependent manner. Interacts (via C-terminus) with actin; this interaction is direct and mediates association with the phosphorylated CTD of RNA polymerase II and is disrupted in presence of the long non-coding H19 RNA. Interacts with AURKA. Interacts (via C-terminus) with CBX5; this interaction is, at least in part, RNA-dependent. Interacts with CR2. Interacts with CRY1. Interacts (via C-terminus) with EP300; this interaction enhances DNA-binding to nuclear scaffold/matrix attachment region (S/MAR) elements. Interacts with ERBB4. Interacts with GEMIN5. Interacts with IGF2BP1. Interacts with IGF2BP2 and IGF2BP3. Interacts with NCL; this interaction occurs during mitosis. Interacts (via C-terminus) with NR3C1 (via C-terminus). Interacts with PLK1; this interaction induces phosphorylation of HNRNPU at Ser-58 in mitosis. Interacts with POU3F4. Interacts with SMARCA4; this interaction occurs in embryonic stem cells and stimulates global Pol II-mediated transcription. Interacts (via C-terminus) with TOP2A; this interaction protects the topoisomerase TOP2A from degradation and positively regulates the relaxation of supercoiled DNA by TOP2A in a RNA-dependent manner. Interacts with TPX2; this interaction recruits HNRNPU to spindle microtubules (MTs). Interacts with UBQLN2. Interacts (via RNA-binding RGG-box region) with ZBTB7B; the interaction facilitates the recruitment of long non-coding RNA Blnc1 by ZBTB7B. Interacts with ERCC6. In terms of processing, cleaved at Asp-94 by CASP3 during T-cell apoptosis, resulting in a loss of DNA- and chromatin-binding activities. Post-translationally, extensively phosphorylated. Phosphorylated on Ser-58 by PLK1 and dephosphorylated by protein phosphatase 2A (PP2A) in mitosis. Arg-707 and Arg-713 are dimethylated, probably to asymmetric dimethylarginine. In terms of processing, citrullinated by PADI4.

It localises to the nucleus. Its subcellular location is the nucleus matrix. The protein localises to the chromosome. The protein resides in the nucleus speckle. It is found in the cytoplasm. It localises to the cytoskeleton. Its subcellular location is the microtubule organizing center. The protein localises to the centrosome. The protein resides in the centromere. It is found in the kinetochore. It localises to the spindle. Its subcellular location is the spindle pole. The protein localises to the midbody. The protein resides in the cell surface. It is found in the cytoplasmic granule. Its function is as follows. DNA- and RNA-binding protein involved in several cellular processes such as nuclear chromatin organization, telomere-length regulation, transcription, mRNA alternative splicing and stability, Xist-mediated transcriptional silencing and mitotic cell progression. Plays a role in the regulation of interphase large-scale gene-rich chromatin organization through chromatin-associated RNAs (caRNAs) in a transcription-dependent manner, and thereby maintains genomic stability. Required for the localization of the long non-coding Xist RNA on the inactive chromosome X (Xi) and the subsequent initiation and maintenance of X-linked transcriptional gene silencing during X-inactivation. Required for the topoisomerase TOP2A protein stability and activity in a RNA-dependent manner. Plays a role as a RNA polymerase II (Pol II) holoenzyme transcription regulator. Promotes transcription initiation by direct association with the core-TFIIH basal transcription factor complex for the assembly of a functional pre-initiation complex with Pol II in a actin-dependent manner. Blocks Pol II transcription elongation activity by inhibiting the C-terminal domain (CTD) phosphorylation of Pol II and dissociates from Pol II pre-initiation complex prior to productive transcription elongation. Positively regulates CBX5-induced transcriptional gene silencing and retention of CBX5 in the nucleus. Negatively regulates glucocorticoid-mediated transcriptional activation. Key regulator of transcription initiation and elongation in embryonic stem cells upon leukemia inhibitory factor (LIF) signaling. Involved in the long non-coding RNA H19-mediated Pol II transcriptional repression. Participates in the circadian regulation of the core clock component BMAL1 transcription. Plays a role in the regulation of telomere length. Plays a role as a global pre-mRNA alternative splicing modulator by regulating U2 small nuclear ribonucleoprotein (snRNP) biogenesis. Plays a role in mRNA stability. Component of the CRD-mediated complex that promotes MYC mRNA stabilization. Enhances the expression of specific genes, such as tumor necrosis factor TNFA, by regulating mRNA stability, possibly through binding to the 3'-untranslated region (UTR). Plays a role in mitotic cell cycle regulation. Involved in the formation of stable mitotic spindle microtubules (MTs) attachment to kinetochore, spindle organization and chromosome congression. Phosphorylation at Ser-58 by PLK1 is required for chromosome alignement and segregation and progression through mitosis. Also contributes to the targeting of AURKA to mitotic spindle MTs. Binds to double- and single-stranded DNA and RNA, poly(A), poly(C) and poly(G) oligoribonucleotides. Binds to chromatin-associated RNAs (caRNAs). Associates with chromatin to scaffold/matrix attachment region (S/MAR) elements in DNA. Associates with chromatin in a chromatin-associated RNAs (caRNAs)-dependent manner. Binds to the Xist RNA. Binds the long non-coding H19 RNA. Binds to SMN1/2 pre-mRNAs at G/U-rich regions. Binds to small nuclear RNAs (snRNAs). Binds to the 3'-UTR of TNFA mRNA. Binds (via RNA-binding RGG-box region) to the long non-coding Xist RNA; this binding is direct and bridges the Xist RNA and the inactive chromosome X (Xi). Also negatively regulates embryonic stem cell differentiation upon LIF signaling. Required for embryonic development. Binds to brown fat long non-coding RNA 1 (Blnc1); facilitates the recruitment of Blnc1 by ZBTB7B required to drive brown and beige fat development and thermogenesis. In Rattus norvegicus (Rat), this protein is Heterogeneous nuclear ribonucleoprotein U.